A 131-amino-acid chain; its full sequence is Arsenate reductase 1 (131 aa).

Active-site nucleophile residues include Cys-10, Cys-82, and Cys-89. 2 disulfides stabilise this stretch: Cys-10/Cys-82 and Cys-82/Cys-89.

It belongs to the low molecular weight phosphotyrosine protein phosphatase family. Thioredoxin-coupled ArsC subfamily.

The protein resides in the cytoplasm. The catalysed reaction is arsenate + [thioredoxin]-dithiol + H(+) = arsenite + [thioredoxin]-disulfide + H2O. In terms of biological role, catalyzes the reduction of arsenate [As(V)] to arsenite [As(III)]. The polypeptide is Arsenate reductase 1 (Staphylococcus saprophyticus subsp. saprophyticus (strain ATCC 15305 / DSM 20229 / NCIMB 8711 / NCTC 7292 / S-41)).